Reading from the N-terminus, the 608-residue chain is ATP-binding protein Uup (608 aa).

2 ABC transporter domains span residues Ala7 to Ala217 and Val285 to Val512. ATP contacts are provided by residues Gly42–Ser49 and Gly317–Thr324. Residues Ala522–Gly608 form a C-terminal domain (CTD), binds DNA region.

It belongs to the ABC transporter superfamily. ABCF family. Uup subfamily.

Its subcellular location is the cytoplasm. It catalyses the reaction ATP + H2O = ADP + phosphate + H(+). In terms of biological role, probably plays a role in ribosome assembly or function. May be involved in resolution of branched DNA intermediates that result from template switching in postreplication gaps. Binds DNA and has ATPase activity. Functionally, one of a cluster of genes involved in attachment of the holdfast to the cell. The holdfast is a structure that allows the bacteria to firmly adhere to surfaces. This Caulobacter vibrioides (strain ATCC 19089 / CIP 103742 / CB 15) (Caulobacter crescentus) protein is ATP-binding protein Uup.